A 473-amino-acid polypeptide reads, in one-letter code: Cysteine--tRNA ligase (473 aa).

A Zn(2+)-binding site is contributed by C30. The 'HIGH' region signature appears at 32–42 (MTVYDYCHIGH). Residues C213, H238, and E242 each contribute to the Zn(2+) site. The 'KMSKS' region signature appears at 270-274 (KMSKS). K273 contributes to the ATP binding site.

Belongs to the class-I aminoacyl-tRNA synthetase family. Monomer. Requires Zn(2+) as cofactor.

It localises to the cytoplasm. It catalyses the reaction tRNA(Cys) + L-cysteine + ATP = L-cysteinyl-tRNA(Cys) + AMP + diphosphate. The sequence is that of Cysteine--tRNA ligase from Acinetobacter baumannii (strain AB307-0294).